The primary structure comprises 328 residues: uncharacterized protein (328 aa).

The N-terminal stretch at 1 to 24 (MKSIKGLGKLLLASSILFSSSAFA) is a signal peptide.

It belongs to the bacterial solute-binding protein 7 family.

The protein localises to the periplasm. This is an uncharacterized protein from Haemophilus influenzae (strain ATCC 51907 / DSM 11121 / KW20 / Rd).